Consider the following 370-residue polypeptide: 3-dehydroquinate synthase (370 aa).

Residues 107–111, 131–132, Lys-144, and Lys-153 each bind NAD(+); these read GVIGD and TS. Zn(2+) contacts are provided by Glu-186, His-249, and His-267.

Belongs to the sugar phosphate cyclases superfamily. Dehydroquinate synthase family. Co(2+) serves as cofactor. Zn(2+) is required as a cofactor. Requires NAD(+) as cofactor.

It localises to the cytoplasm. The enzyme catalyses 7-phospho-2-dehydro-3-deoxy-D-arabino-heptonate = 3-dehydroquinate + phosphate. Its pathway is metabolic intermediate biosynthesis; chorismate biosynthesis; chorismate from D-erythrose 4-phosphate and phosphoenolpyruvate: step 2/7. Functionally, catalyzes the conversion of 3-deoxy-D-arabino-heptulosonate 7-phosphate (DAHP) to dehydroquinate (DHQ). The sequence is that of 3-dehydroquinate synthase from Ruegeria pomeroyi (strain ATCC 700808 / DSM 15171 / DSS-3) (Silicibacter pomeroyi).